Consider the following 273-residue polypeptide: 29 kDa ribonucleoprotein A, chloroplastic (273 aa).

A chloroplast-targeting transit peptide spans 1-58 (MASSASSLHFLSLTPQTLPLPKPTSQTTSLSFFSLPPSSLNLSLSSSSSCFSSRFVRK). In terms of domain architecture, RRM 1 spans 87-165 (LKIFVGNLPF…RALRVNSGPP (79 aa)). Residues 156-181 (RALRVNSGPPPEKRENSSFRGGSRGG) are disordered. The interval 166 to 187 (PEKRENSSFRGGSRGGGSFDSS) is linker (Gly-rich). The RRM 2 domain maps to 188-266 (NRVYVGNLAW…RAIRVSPAEA (79 aa)).

It is found in the plastid. Its subcellular location is the chloroplast. Its function is as follows. Could be involved in splicing and/or processing of chloroplast RNA's. The chain is 29 kDa ribonucleoprotein A, chloroplastic from Nicotiana sylvestris (Wood tobacco).